The sequence spans 403 residues: Serine/threonine transporter SstT (403 aa).

The next 9 helical transmembrane spans lie at 14–34 (VTQI…APAI), 44–64 (VFVS…VMAS), 79–99 (ILWL…VASM), 138–158 (ALLN…GVAL), 175–195 (GVTL…FGLV), 214–234 (LAVL…LIVF), 295–315 (MAGA…TLGI), 327–347 (VVAA…LLLI), and 353–373 (LFGI…IIGV).

The protein belongs to the dicarboxylate/amino acid:cation symporter (DAACS) (TC 2.A.23) family.

The protein resides in the cell inner membrane. The catalysed reaction is L-serine(in) + Na(+)(in) = L-serine(out) + Na(+)(out). It carries out the reaction L-threonine(in) + Na(+)(in) = L-threonine(out) + Na(+)(out). Its function is as follows. Involved in the import of serine and threonine into the cell, with the concomitant import of sodium (symport system). The polypeptide is Serine/threonine transporter SstT (Pseudomonas putida (strain ATCC 700007 / DSM 6899 / JCM 31910 / BCRC 17059 / LMG 24140 / F1)).